We begin with the raw amino-acid sequence, 93 residues long: Small ribosomal subunit protein uS19c (93 aa).

The protein belongs to the universal ribosomal protein uS19 family.

Its subcellular location is the plastid. It localises to the chloroplast. Functionally, protein S19 forms a complex with S13 that binds strongly to the 16S ribosomal RNA. This chain is Small ribosomal subunit protein uS19c, found in Tetradesmus obliquus (Green alga).